The chain runs to 230 residues: Ureidoacrylate amidohydrolase RutB (230 aa).

Residue aspartate 24 is the Proton acceptor of the active site. The active site involves lysine 133. Residue cysteine 166 is the Nucleophile of the active site.

It belongs to the isochorismatase family. RutB subfamily.

The catalysed reaction is (Z)-3-ureidoacrylate + H2O + H(+) = (Z)-3-aminoacrylate + NH4(+) + CO2. It carries out the reaction (Z)-3-ureidoacrylate + H2O = (Z)-3-aminoacrylate + carbamate + H(+). The enzyme catalyses (Z)-2-methylureidoacrylate + H2O + H(+) = (Z)-2-methylaminoacrylate + NH4(+) + CO2. Its function is as follows. Hydrolyzes ureidoacrylate to form aminoacrylate and carbamate. The carbamate hydrolyzes spontaneously, thereby releasing one of the nitrogen atoms of the pyrimidine ring as ammonia and one of its carbon atoms as CO2. The protein is Ureidoacrylate amidohydrolase RutB of Escherichia coli (strain K12 / MC4100 / BW2952).